A 380-amino-acid polypeptide reads, in one-letter code: Endo-chitosanase C (380 aa).

The signal sequence occupies residues 1–22; sequence MPIKSFASRLALSLAICGTAMG. Residues 276–304 form an R3-1 repeat; the sequence is CSWPGHCAGATCSSNDDCSDDLTCQNGKC. Residues 311–341 form an R3-2 repeat; sequence ETCSWEGHCKGATCSSNDDCSDELACISGIC. The stretch at 348–378 is one R3-3 repeat; the sequence is ETCEWEGHCEGASCSSHDDCDGNLACKNGKC.

Belongs to the glycosyl hydrolase 75 family.

The protein localises to the secreted. It catalyses the reaction Endohydrolysis of beta-(1-&gt;4)-linkages between D-glucosamine residues in a partly acetylated chitosan.. In terms of biological role, chitosanase catalyzing the endo-type cleavage of chitosan, the deacylated form of chitin. Chitosanase may be crucial in the degradation of the deacetylated portion of chitin in the fungal cell wall. Chitoolisaccharides produced by the hydrolysis of partially N-acetylated chitosan are known to have many biological activities, including antibacterial activity, immune-enhancing effects, and elicitor activity. The sequence is that of Endo-chitosanase C (csnC) from Aspergillus oryzae (Yellow koji mold).